The chain runs to 1083 residues: Error-prone DNA polymerase (1083 aa).

Belongs to the DNA polymerase type-C family. DnaE2 subfamily.

The protein localises to the cytoplasm. It carries out the reaction DNA(n) + a 2'-deoxyribonucleoside 5'-triphosphate = DNA(n+1) + diphosphate. In terms of biological role, DNA polymerase involved in damage-induced mutagenesis and translesion synthesis (TLS). It is not the major replicative DNA polymerase. This chain is Error-prone DNA polymerase, found in Xanthomonas oryzae pv. oryzae (strain PXO99A).